The sequence spans 346 residues: Phosphoribosylformylglycinamidine cyclo-ligase (346 aa).

This sequence belongs to the AIR synthase family.

The protein resides in the cytoplasm. The enzyme catalyses 2-formamido-N(1)-(5-O-phospho-beta-D-ribosyl)acetamidine + ATP = 5-amino-1-(5-phospho-beta-D-ribosyl)imidazole + ADP + phosphate + H(+). Its pathway is purine metabolism; IMP biosynthesis via de novo pathway; 5-amino-1-(5-phospho-D-ribosyl)imidazole from N(2)-formyl-N(1)-(5-phospho-D-ribosyl)glycinamide: step 2/2. The chain is Phosphoribosylformylglycinamidine cyclo-ligase from Prochlorococcus marinus (strain NATL1A).